The following is a 327-amino-acid chain: Mitochondrial thiamine pyrophosphate carrier 1 (327 aa).

Solcar repeat units follow at residues 13–114 (GSKL…AAQL), 126–214 (PAAA…LRAP), and 222–317 (FWGG…VLRA). Transmembrane regions (helical) follow at residues 16-36 (LQVV…IAPL), 95-111 (LLYI…YRSA), 132-152 (FVAG…LDLL), 189-209 (GIGP…AAYE), 223-245 (WGGQ…VFPL), and 292-309 (GLTV…VTMW).

Belongs to the mitochondrial carrier (TC 2.A.29) family.

Its subcellular location is the mitochondrion inner membrane. Mitochondrial transporter that mediates uptake of thiamine pyrophosphate (ThPP) into mitochondria. The chain is Mitochondrial thiamine pyrophosphate carrier 1 (TPC1) from Pyricularia oryzae (strain 70-15 / ATCC MYA-4617 / FGSC 8958) (Rice blast fungus).